Here is a 367-residue protein sequence, read N- to C-terminus: Probable butyrate kinase (367 aa).

Belongs to the acetokinase family.

It is found in the cytoplasm. It catalyses the reaction butanoate + ATP = butanoyl phosphate + ADP. The chain is Probable butyrate kinase from Bacillus cereus (strain Q1).